The sequence spans 116 residues: Nascent polypeptide-associated complex protein (116 aa).

Residues 6-70 enclose the NAC-A/B domain; that stretch reads PKQMKDLERM…AREESKQQQK (65 aa).

This sequence belongs to the NAC-alpha family. Homodimer. Interacts with the ribosome. Binds ribosomal RNA.

In terms of biological role, contacts the emerging nascent chain on the ribosome. The polypeptide is Nascent polypeptide-associated complex protein (Sulfolobus acidocaldarius (strain ATCC 33909 / DSM 639 / JCM 8929 / NBRC 15157 / NCIMB 11770)).